We begin with the raw amino-acid sequence, 416 residues long: Glutamyl-tRNA reductase (416 aa).

Substrate is bound by residues 49 to 52 (TCNR), S105, 110 to 112 (EPQ), and Q116. C50 serves as the catalytic Nucleophile. 185 to 190 (GAGEMI) provides a ligand contact to NADP(+).

Belongs to the glutamyl-tRNA reductase family. Homodimer.

It carries out the reaction (S)-4-amino-5-oxopentanoate + tRNA(Glu) + NADP(+) = L-glutamyl-tRNA(Glu) + NADPH + H(+). The protein operates within porphyrin-containing compound metabolism; protoporphyrin-IX biosynthesis; 5-aminolevulinate from L-glutamyl-tRNA(Glu): step 1/2. Its function is as follows. Catalyzes the NADPH-dependent reduction of glutamyl-tRNA(Glu) to glutamate 1-semialdehyde (GSA). The sequence is that of Glutamyl-tRNA reductase from Nitrosomonas europaea (strain ATCC 19718 / CIP 103999 / KCTC 2705 / NBRC 14298).